The following is a 419-amino-acid chain: Serine/threonine-protein kinase Kist (419 aa).

One can recognise a Protein kinase domain in the interval 23-304; sequence WQVQSRLGSG…AEMALCSPFF (282 aa). Residues 29-37 and Lys-54 contribute to the ATP site; that span reads LGSGSSASV. Active-site proton acceptor residues include Asp-141 and Asp-158. One can recognise an RRM domain in the interval 324–406; sequence RLLNVLDDDY…KFVVATFYPL (83 aa).

Belongs to the protein kinase superfamily. Ser/Thr protein kinase family. In terms of assembly, interacts with stathmin and CDKN1B/p27Kip1 Interacts with PAM. In terms of tissue distribution, in the embryo, preferentially expressed in the developing nervous system.

It is found in the cytoplasm. Its subcellular location is the nucleus. It carries out the reaction L-seryl-[protein] + ATP = O-phospho-L-seryl-[protein] + ADP + H(+). The catalysed reaction is L-threonyl-[protein] + ATP = O-phospho-L-threonyl-[protein] + ADP + H(+). In terms of biological role, upon serum stimulation, phosphorylates CDKN1B/p27Kip1, thus controlling CDKN1B subcellular location and cell cycle progression in G1 phase. May be involved in trafficking and/or processing of RNA. This chain is Serine/threonine-protein kinase Kist (Uhmk1), found in Rattus norvegicus (Rat).